Consider the following 408-residue polypeptide: Peptidoglycan muramidase Tse3 (408 aa).

Ca(2+)-binding residues include Asn181, Asp253, Gln254, Glu258, Glu375, Ser378, Arg379, Asp382, and Asn384.

As to quaternary structure, forms a heterotetramer with Tsi3 consisting of two Tse3 dimers and two Tsi3 dimers. Formation of the complex inactivates Tse3 enzymatic activity. It depends on Ca(2+) as a cofactor.

It is found in the host membrane. The protein resides in the secreted. The enzyme catalyses Hydrolysis of (1-&gt;4)-beta-linkages between N-acetylmuramic acid and N-acetyl-D-glucosamine residues in a peptidoglycan and between N-acetyl-D-glucosamine residues in chitodextrins.. Enzymatic activity depends on membrane binding. Its function is as follows. Toxin secreted by the H1 type VI (H1-T6SS) secretion system into the periplasm of recipient cells. Degrades peptidoglycan via muramidase activity thereby helping itself to compete with other bacteria. To protect itself, the bacterium synthesizes immunity protein Tsi3 that specifically interacts with and inactivates cognate toxin. In Pseudomonas aeruginosa (strain ATCC 15692 / DSM 22644 / CIP 104116 / JCM 14847 / LMG 12228 / 1C / PRS 101 / PAO1), this protein is Peptidoglycan muramidase Tse3.